A 524-amino-acid chain; its full sequence is Methyl-CpG-binding domain-containing protein 8 (524 aa).

Over residues 45-60 the composition is skewed to low complexity; sequence CSSLSPSSSASLAASA. The segment at 45–151 is disordered; that stretch reads CSSLSPSSSA…EEELEDNEGQ (107 aa). A compositionally biased stretch (polar residues) spans 75–84; that stretch reads FNESAGSRKQ. Over residues 106–116 the composition is skewed to basic and acidic residues; that stretch reads RQRDDSSREEQ. Positions 136–149 are enriched in acidic residues; that stretch reads EEEDEGEEELEDNE. Residues 334 to 406 form the MBD domain; sequence VVNACDYGGY…QHYYLQSDNK (73 aa).

In terms of tissue distribution, expressed in shoot meristems, roots (vasculature and tips), hypocotyls (vasculature), cotyledons (vasculature and hydathodes), young leaves, buds, flowers and stems. Detected in stomata.

The protein localises to the nucleus. Its function is as follows. Probable transcriptional regulator. May regulates developmental traits such as flowering time. The chain is Methyl-CpG-binding domain-containing protein 8 (MBD8) from Arabidopsis thaliana (Mouse-ear cress).